A 105-amino-acid polypeptide reads, in one-letter code: Circadian clock oscillator protein KaiB1 (105 aa).

Belongs to the KaiB family. As to quaternary structure, homotetramer in solution and crystals formed by 2 dimers. Only elutes as a homotetramer in size exclusion chromatography, interacts with KaiC1 and KaiC3. The KaiABC complex composition changes during the circadian cycle to control KaiC phosphorylation. Complexes KaiC(6), KaiA(2-4):KaiC(6), KaiB(6):KaiC(6) and KaiC(6):KaiB(6):KaiA(12) are among the most important forms, many form cooperatively. Undergoes a major conformational rearrangment; in the free state forms homotetramers as a dimer of dimers. When bound to the CI domain of KaiC switches to a monomeric thioredoxin-fold (KaiB(fs)). KaiB(fs) binds CikA, leading it to dephosphorylate phospho-RpaA.

Functionally, key component of the KaiABC oscillator complex, which constitutes the main circadian regulator in cyanobacteria. Complex composition changes during the circadian cycle to control KaiC phosphorylation. KaiA stimulates KaiC autophosphorylation, while KaiB sequesters KaiA, leading to KaiC autodephosphorylation. Phospho-Ser-431 KaiC accumulation triggers binding of KaiB to form the KaiB(6):KaiC(6) complex, leading to changes in output regulators CikA and SasA. KaiB switches to a thioredoxin-like fold (KaiB(fs)) when bound to KaiC. KaiB(6):KaiC(6) formation exposes a site for KaiA binding that sequesters KaiA from KaiC, making the KaiC(6):KaiB(6):KaiA(12) complex that results in KaiC autodephosphorylation. Component of the oscillator and circadian clock in this organism, enhances fitness in a rhythmic environment. The homotetramer reduces the ATPase activity of KaiC3 by 35%. In terms of biological role, a metamorphic protein which reversibly switches between an inactive tetrameric fold and a rare, thioredoxin-like monomeric fold (KaiB(fs)). KaiB(fs) binds phospho-KaiC, KaiA and CikA. KaiA and CikA compete for binding to KaiB(fs), and KaiB(fs) and SasA compete for binding to KaiC, thus the clock oscillator and output signal pathway are tightly coupled. This chain is Circadian clock oscillator protein KaiB1, found in Synechocystis sp. (strain ATCC 27184 / PCC 6803 / Kazusa).